A 425-amino-acid chain; its full sequence is Dihydroorotase (425 aa).

Zn(2+) is bound by residues His-56 and His-58. Residues 58–60 (HYR) and Asn-90 contribute to the substrate site. 3 residues coordinate Zn(2+): Asp-148, His-175, and His-228. Residue Asn-274 coordinates substrate. Residue Asp-301 participates in Zn(2+) binding. Asp-301 is a catalytic residue. Substrate-binding positions include His-305 and 319–320 (FG).

This sequence belongs to the metallo-dependent hydrolases superfamily. DHOase family. Class I DHOase subfamily. Zn(2+) is required as a cofactor.

The catalysed reaction is (S)-dihydroorotate + H2O = N-carbamoyl-L-aspartate + H(+). It participates in pyrimidine metabolism; UMP biosynthesis via de novo pathway; (S)-dihydroorotate from bicarbonate: step 3/3. Its function is as follows. Catalyzes the reversible cyclization of carbamoyl aspartate to dihydroorotate. The sequence is that of Dihydroorotase from Lactobacillus johnsonii (strain CNCM I-12250 / La1 / NCC 533).